The sequence spans 491 residues: Delayed-rectifier potassium channel regulatory subunit KCNS3 (491 aa).

Over 1–182 (MVFGEFFHRP…IRMENPAYCL (182 aa)) the chain is Cytoplasmic. Residues 183 to 204 (SAKLIAISSLSVVLASIVAMCV) form a helical membrane-spanning segment. The Extracellular segment spans residues 205–220 (HSMSEFQNEDGEVDDP). A helical membrane pass occupies residues 221–243 (VLEGVEIACIAWFTGELAVRLAA). Residues 244–254 (APCQKKFWKNP) lie on the Cytoplasmic side of the membrane. The chain crosses the membrane as a helical span at residues 255–275 (LNIIDFVSIIPFYATLAVDTK). Topologically, residues 276-285 (EEESEDIENM) are extracellular. The helical; Voltage-sensor transmembrane segment at 286-306 (GKVVQILRLMRIFRILKLARH) threads the bilayer. Residues 307–321 (SVGLRSLGATLRHSY) lie on the Cytoplasmic side of the membrane. The chain crosses the membrane as a helical span at residues 322-343 (HEVGLLLLFLSVGISIFSVLIY). Topologically, residues 344-357 (SVEKDDHTSSLTSI) are extracellular. Positions 358-369 (PICWWWATISMT) form an intramembrane region, helical. The Selectivity filter signature appears at 370–375 (TVGYGD). Residues 370–377 (TVGYGDTH) lie within the membrane without spanning it. At 378-384 (PVTLAGK) the chain is on the extracellular side. The chain crosses the membrane as a helical span at residues 385 to 413 (LIASTCIICGILVVALPITIIFNKFSKYY). At 414–491 (QKQKDIDVDQ…TTSLENCTAK (78 aa)) the chain is on the cytoplasmic side.

The protein belongs to the potassium channel family. S (TC 1.A.1.2) subfamily. Kv9.3/KCNS3 sub-subfamily. As to quaternary structure, heterotetramer with KCNB1. Does not form homomultimers. As to expression, detected in whole normal term placental and placental chorionic plate arteries and veins. Detected in syncytiotrophoblast and in blood vessel endothelium within intermediate villi and chorionic plate (at protein level). Detected in most tissues, but not in peripheral blood lymphocytes. The highest levels of expression are in lung.

It localises to the cell membrane. Potassium channel regulatory subunit that modulates the delayed rectifier potassium channel activity of KCNB1 by namely slowing down the deactivation and inactivation time constants. While it does not form functional channel on its own, it can form functional heterotetrameric channels with KCNB1. This is Delayed-rectifier potassium channel regulatory subunit KCNS3 from Homo sapiens (Human).